The chain runs to 357 residues: bZIP transcription factor 23 (357 aa).

A disordered region spans residues 166 to 185 (PPVPPAPTPTAAAVPPPPPP). The region spanning 275-338 (VERRQRRMIK…KNEVLERMSR (64 aa)) is the bZIP domain. Residues 277–296 (RRQRRMIKNRESAARSRQRK) are basic motif. Residues 303–317 (LEAEVAKLKELNDEL) are leucine-zipper.

It belongs to the bZIP family. ABI5 subfamily. As to expression, highly expressed in leaves.

It localises to the nucleus. Functionally, transcriptional activator that mediates abscisic acid (ABA) signaling. Can regulate the expression of a wide spectrum of stress-related genes in response to abiotic stresses through an ABA-dependent regulation pathway. Confers ABA-dependent drought and salinity tolerance. Binds specifically to the ABA-responsive elements (ABRE) in the promoter of target genes to mediate stress-responsive ABA signaling. This Oryza sativa subsp. japonica (Rice) protein is bZIP transcription factor 23.